The chain runs to 199 residues: Photosystem I reaction center subunit XI (199 aa).

The next 2 helical transmembrane spans lie at 108–128 and 165–185; these read VTAG…LLVL and FWLG…TLHL.

Belongs to the PsaL family.

The protein localises to the cellular thylakoid membrane. This is Photosystem I reaction center subunit XI from Prochlorococcus marinus (strain MIT 9215).